The chain runs to 283 residues: Probable endonuclease 4 (283 aa).

9 residues coordinate Zn(2+): His69, His113, Glu148, Asp182, His185, His217, Asp230, His232, and Glu262.

Belongs to the AP endonuclease 2 family. Requires Zn(2+) as cofactor.

The enzyme catalyses Endonucleolytic cleavage to 5'-phosphooligonucleotide end-products.. Its function is as follows. Endonuclease IV plays a role in DNA repair. It cleaves phosphodiester bonds at apurinic or apyrimidinic (AP) sites, generating a 3'-hydroxyl group and a 5'-terminal sugar phosphate. In Bifidobacterium longum (strain NCC 2705), this protein is Probable endonuclease 4.